Here is a 479-residue protein sequence, read N- to C-terminus: Sodium-coupled neutral amino acid transporter 5 (479 aa).

Over 1–58 (MAISCAVGMEMQEPKMNGTLSTGAAAGYRQEREGFLPTTHGPAPGRKPVQFLDFEGKT) the chain is Cytoplasmic. A helical transmembrane segment spans residues 59–81 (SFGMSVFNLSNAIMGSGILGLAY). Topologically, residues 82 to 97 (AMAHTGVIFFLALLLC) are extracellular. The chain crosses the membrane as a helical span at residues 98–118 (IALLSSYSIHLLLTCASVVGI). At 119-135 (RAYEQLGQRAFGPAGKV) the chain is on the cytoplasmic side. Residues 136-156 (VVAIIICLHNVGAMSSYLFII) traverse the membrane as a helical segment. Residues 157-176 (KSELPLVIGTFLHMDPEGDW) lie on the Extracellular side of the membrane. Residues 177–197 (FLKGNLLIILVSLLIILPLAL) form a helical membrane-spanning segment. Residues 198–202 (MKHLG) lie on the Cytoplasmic side of the membrane. Residues 203-223 (YLGYTSSLSLTCMLFFLISVI) traverse the membrane as a helical segment. Residues 224-264 (YKKFQLGCVVSHNDTVVESEPAPLQAFNSSCEAKLFTVDSQ) are Extracellular-facing. Cys-231 and Cys-254 are joined by a disulfide. Asn-236 is a glycosylation site (N-linked (GlcNAc...) asparagine). Residues 265–285 (MSYTVPIMAFAFVCHPEVLPI) form a helical membrane-spanning segment. At 286-302 (YTELCCPTQRRMQAVAN) the chain is on the cytoplasmic side. The helical transmembrane segment at 303-323 (MSIGAMFIMYGLTATFGYLTF) threads the bilayer. Residues 324 to 341 (YSTVKAEMLEMYTQEDLL) lie on the Extracellular side of the membrane. The chain crosses the membrane as a helical span at residues 342-362 (ILCVRLAVLLAVTLTVPVVLF). Residues 363–383 (PIRRALQQLLFPSKAFSWPRH) lie on the Cytoplasmic side of the membrane. The chain crosses the membrane as a helical span at residues 384-404 (VAIALILLILVNILVICVPTI). At 405–406 (RD) the chain is on the extracellular side. The helical transmembrane segment at 407–427 (IFGFIGSTSAPSLIFILPSVF) threads the bilayer. Over 428-446 (YLRIVPADMEPLFSWPKIQ) the chain is Cytoplasmic. Residues 447-467 (ALCFGVLGVLFMAISLGFMFA) form a helical membrane-spanning segment. At 468 to 479 (NWATGQSRMSGH) the chain is on the extracellular side.

Belongs to the amino acid/polyamine transporter 2 family. Highly expressed in neocortex, hippocampus, striatum and spinal cord by astrocytes (at protein level). Expressed in brain, lung, stomach, kidney, spleen and testis. Expressed in the cerebral cortex between the second and third postnatal week, where expressed exclusively in glial cells from postnatal day 14 to adulthood (at protein level). Expressed in the cerebellum at post natal day 12 (P12). Expressed in liver. Expressed inside the cell body of the astrocytes.

The protein localises to the cell membrane. The enzyme catalyses L-serine(out) + Na(+)(out) + H(+)(in) = L-serine(in) + Na(+)(in) + H(+)(out). It carries out the reaction L-alanine(out) + Na(+)(out) + H(+)(in) = L-alanine(in) + Na(+)(in) + H(+)(out). It catalyses the reaction glycine(out) + Na(+)(out) + H(+)(in) = glycine(in) + Na(+)(in) + H(+)(out). The catalysed reaction is L-glutamine(out) + Na(+)(out) + H(+)(in) = L-glutamine(in) + Na(+)(in) + H(+)(out). The enzyme catalyses L-asparagine(out) + Na(+)(out) + H(+)(in) = L-asparagine(in) + Na(+)(in) + H(+)(out). It carries out the reaction L-histidine(out) + Na(+)(out) + H(+)(in) = L-histidine(in) + Na(+)(in) + H(+)(out). It catalyses the reaction L-cysteine(out) + Na(+)(out) + H(+)(in) = L-cysteine(in) + Na(+)(in) + H(+)(out). Not inhibited by lithium. Partial allosteric regulation on ions sodium binding. Functionally, symporter that cotransports neutral amino acids and sodium ions, coupled to an H(+) antiporter activity. Releases L-glutamine and glycine from astroglial cells and may participate in the glutamate/GABA-glutamine cycle and the NMDA receptors activation. In addition contributes significantly to L-glutamine uptake in retina, namely in ganglion and Mueller cells and, therefore participates in the retinal glutamate-glutamine cycle. The transport activity is pH sensitive, Li(+) tolerant, bidirectional and associated with large uncoupled fluxes of protons. The transport is electroneutral coupled to the cotransport of 1 Na(+) and the antiport of 1 H(+). May have particular importance for modulation of net hepatic glutamine flux. In Rattus norvegicus (Rat), this protein is Sodium-coupled neutral amino acid transporter 5.